Here is a 229-residue protein sequence, read N- to C-terminus: Large ribosomal subunit protein uL1 (229 aa).

It belongs to the universal ribosomal protein uL1 family. Part of the 50S ribosomal subunit.

Binds directly to 23S rRNA. The L1 stalk is quite mobile in the ribosome, and is involved in E site tRNA release. In terms of biological role, protein L1 is also a translational repressor protein, it controls the translation of the L11 operon by binding to its mRNA. In Thermus thermophilus (strain ATCC BAA-163 / DSM 7039 / HB27), this protein is Large ribosomal subunit protein uL1.